The following is a 139-amino-acid chain: Protein Turandot B (139 aa).

An N-terminal signal peptide occupies residues 1–21; that stretch reads MNFNMSMICFALLLIVTLCSA.

Belongs to the Turandot family.

The protein resides in the secreted. Its function is as follows. A humoral factor that may play a role in stress tolerance. The sequence is that of Protein Turandot B from Drosophila yakuba (Fruit fly).